We begin with the raw amino-acid sequence, 359 residues long: Phosphoserine aminotransferase (359 aa).

Arg41 is a binding site for L-glutamate. Residues 75–76, Trp101, Thr152, Asp171, and Gln194 contribute to the pyridoxal 5'-phosphate site; that span reads AS. Lys195 bears the N6-(pyridoxal phosphate)lysine mark. 236–237 is a pyridoxal 5'-phosphate binding site; it reads NT.

It belongs to the class-V pyridoxal-phosphate-dependent aminotransferase family. SerC subfamily. As to quaternary structure, homodimer. Requires pyridoxal 5'-phosphate as cofactor.

The protein resides in the cytoplasm. It carries out the reaction O-phospho-L-serine + 2-oxoglutarate = 3-phosphooxypyruvate + L-glutamate. The enzyme catalyses 4-(phosphooxy)-L-threonine + 2-oxoglutarate = (R)-3-hydroxy-2-oxo-4-phosphooxybutanoate + L-glutamate. It functions in the pathway amino-acid biosynthesis; L-serine biosynthesis; L-serine from 3-phospho-D-glycerate: step 2/3. The protein operates within cofactor biosynthesis; pyridoxine 5'-phosphate biosynthesis; pyridoxine 5'-phosphate from D-erythrose 4-phosphate: step 3/5. In terms of biological role, catalyzes the reversible conversion of 3-phosphohydroxypyruvate to phosphoserine and of 3-hydroxy-2-oxo-4-phosphonooxybutanoate to phosphohydroxythreonine. In Acinetobacter baumannii (strain ACICU), this protein is Phosphoserine aminotransferase.